The chain runs to 268 residues: UPF0328 protein ECU03_0040 (268 aa).

Belongs to the UPF0328 family.

The polypeptide is UPF0328 protein ECU03_0040 (Encephalitozoon cuniculi (strain GB-M1) (Microsporidian parasite)).